The chain runs to 147 residues: Large ribosomal subunit protein bL9 (147 aa).

Belongs to the bacterial ribosomal protein bL9 family.

Functionally, binds to the 23S rRNA. This chain is Large ribosomal subunit protein bL9, found in Mycoplasma capricolum subsp. capricolum (strain California kid / ATCC 27343 / NCTC 10154).